The chain runs to 1398 residues: DNA-directed RNA polymerase subunit beta' (1398 aa).

4 residues coordinate Zn(2+): Cys-71, Cys-73, Cys-86, and Cys-89. Residues Asp-462, Asp-464, and Asp-466 each contribute to the Mg(2+) site. 4 residues coordinate Zn(2+): Cys-810, Cys-883, Cys-890, and Cys-893. Positions 1377 to 1398 are disordered; that stretch reads EKQAAVVSPAPEAELPALPPAE. Low complexity predominate over residues 1380–1392; sequence AAVVSPAPEAELP.

Belongs to the RNA polymerase beta' chain family. As to quaternary structure, the RNAP catalytic core consists of 2 alpha, 1 beta, 1 beta' and 1 omega subunit. When a sigma factor is associated with the core the holoenzyme is formed, which can initiate transcription. Mg(2+) is required as a cofactor. Zn(2+) serves as cofactor.

The catalysed reaction is RNA(n) + a ribonucleoside 5'-triphosphate = RNA(n+1) + diphosphate. Functionally, DNA-dependent RNA polymerase catalyzes the transcription of DNA into RNA using the four ribonucleoside triphosphates as substrates. The sequence is that of DNA-directed RNA polymerase subunit beta' from Bradyrhizobium diazoefficiens (strain JCM 10833 / BCRC 13528 / IAM 13628 / NBRC 14792 / USDA 110).